The sequence spans 168 residues: uncharacterized protein (168 aa).

3 disordered regions span residues 1–35 (MGSS…KKLD), 48–97 (KVKK…DKGN), and 126–168 (ASIT…GLGM). The stretch at 29–95 (KEKKKLDEKE…KNSLSRSQDK (67 aa)) forms a coiled coil. Over residues 68 to 85 (LAEDPMVKNVAENDHDQM) the composition is skewed to basic and acidic residues. Polar residues predominate over residues 126–139 (ASITESSPSAQSNK). Residues 140–150 (TNDKQREKELE) show a composition bias toward basic and acidic residues. Positions 157 to 168 (VLHKGTKKGLGM) are enriched in basic residues.

This is an uncharacterized protein from Schizosaccharomyces pombe (strain 972 / ATCC 24843) (Fission yeast).